A 616-amino-acid chain; its full sequence is Methylmalonyl-CoA mutase small subunit (616 aa).

The protein belongs to the methylmalonyl-CoA mutase family. As to quaternary structure, heterodimer of an alpha and a beta chain. The cofactor is adenosylcob(III)alamin.

The catalysed reaction is (R)-methylmalonyl-CoA = succinyl-CoA. It participates in metabolic intermediate metabolism; propanoyl-CoA degradation; succinyl-CoA from propanoyl-CoA: step 3/3. Functionally, catalyzes the isomerization of succinyl-CoA to methylmalonyl-CoA during synthesis of propionate from tricarboxylic acid-cycle intermediates. This conversion most likely represents an important source of building blocks for polyketide antibiotic biosynthesis. It is unable to catalyze the conversion of isobutyryl-CoA into N-butyryl-CoA. This chain is Methylmalonyl-CoA mutase small subunit (mutA), found in Streptomyces virginiae (Streptomyces cinnamonensis).